We begin with the raw amino-acid sequence, 559 residues long: Innexin-10 (559 aa).

4 consecutive transmembrane segments (helical) span residues 28–48 (YFTC…QFGG), 102–122 (QWVP…SLLW), 182–202 (FLWL…YLCT), and 283–303 (IFIL…GSFF). Disordered stretches follow at residues 488-514 (EEKQ…YQNQ) and 527-559 (YRTP…STFK). A compositionally biased stretch (low complexity) spans 503–514 (YTNQNPTPYQNQ). Residues 528 to 559 (RTPSLSRGTDSRPVSTATDTDQTKKQSMSTFK) show a composition bias toward polar residues.

Belongs to the pannexin family.

It is found in the cell membrane. The protein localises to the cell junction. The protein resides in the gap junction. Functionally, structural component of the gap junctions. In Caenorhabditis elegans, this protein is Innexin-10 (inx-10).